The following is a 190-amino-acid chain: Class III hydrophobin F (190 aa).

The N-terminal stretch at 1–18 (MRPITILCTLATLSTTLA) is a signal peptide. 4 disulfides stabilise this stretch: Cys54/Cys115, Cys62/Cys109, Cys63/Cys97, and Cys116/Cys131.

Belongs to the fungal hydrophobin family. In terms of assembly, self-assembles to form functional amyloid fibrils called rodlets. Self-assembly into fibrillar rodlets occurs spontaneously at hydrophobic:hydrophilic interfaces and the rodlets further associate laterally to form amphipathic monolayers.

It is found in the secreted. The protein localises to the cell wall. Aerial growth, conidiation, and dispersal of filamentous fungi in the environment rely upon a capability of their secreting small amphipathic proteins called hydrophobins (HPBs) with low sequence identity. Class I can self-assemble into an outermost layer of rodlet bundles on aerial cell surfaces, conferring cellular hydrophobicity that supports fungal growth, development and dispersal; whereas Class II form highly ordered films at water-air interfaces through intermolecular interactions but contribute nothing to the rodlet structure. RodF and rodG belong to Class III, which contains hydrophobins with intermediate (between classes I and II) or atypical characteristics. RodF, unlike rodA, is not required for rodlet formation. The chain is Class III hydrophobin F from Aspergillus fumigatus (strain ATCC MYA-4609 / CBS 101355 / FGSC A1100 / Af293) (Neosartorya fumigata).